The primary structure comprises 686 residues: Protein-glutamine gamma-glutamyltransferase 2 (686 aa).

A2 bears the N-acetylalanine mark. Cystine bridges form between C230-C370 and C370-C371. Catalysis depends on residues C277, H335, and D358. Ca(2+) is bound by residues N398, D400, E437, E447, and E452. At K468 the chain carries N6-acetyllysine. 476 to 483 (RIRVGDSM) serves as a coordination point for GTP. Residue E538 coordinates Ca(2+). 579–582 (RDLY) is a binding site for GTP. Residue Q632 forms an Isoglutamyl lysine isopeptide (Gln-Lys) (interchain with K-?) linkage.

Belongs to the transglutaminase superfamily. Transglutaminase family. As to quaternary structure, monomer. Interacts with phospholipase C; promoting alpha-1 adrenergic receptor signaling. Interacts with PLCD1. Requires Ca(2+) as cofactor. Post-translationally, disulfide bond formation inactivates the calcium-dependent acyltransferase activity. Cys-370 can form disulfide bonds with both Cys-230 and Cys-371: formation of a disulfide bond between Cys-230 and Cys-370 facilitates formation of the disulfide between Cys-370 and Cys-371, which promotes inactivation of the acyltransferase activity. May also form interchain disulfids between Cys-230 and Cys-370. Ca(2+) protects against disulfide bond formation and inactivation. In terms of processing, auto-transglutaminated: Forms covalent cross-links mediated by transglutaminase between Gln-632 and the epsilon-amino group of a lysine residue of itself or HMGB1, forming homopolymers and heteropolymers, respectively. S-nitrosylated, leading to inactivation of the acyltransferase activity.

Its subcellular location is the cytoplasm. The protein localises to the cytosol. The protein resides in the nucleus. It is found in the chromosome. It localises to the secreted. Its subcellular location is the extracellular space. The protein localises to the extracellular matrix. The protein resides in the cell membrane. It is found in the mitochondrion. The enzyme catalyses L-glutaminyl-[protein] + L-lysyl-[protein] = [protein]-L-lysyl-N(6)-5-L-glutamyl-[protein] + NH4(+). It carries out the reaction L-glutaminyl-[protein] + serotonin = 5-serotonyl-L-glutamyl-[protein] + NH4(+). It catalyses the reaction L-glutaminyl-[protein] + dopamine = 5-dopaminyl-L-glutamyl-[protein] + NH4(+). The catalysed reaction is L-glutaminyl-[protein] + histamine = 5-histaminyl-L-glutamyl-[protein] + NH4(+). The enzyme catalyses L-glutaminyl-[protein] + (R)-noradrenaline = 5-(R)-noradrenalinyl-L-glutamyl-[protein] + NH4(+). It carries out the reaction L-glutaminyl-[protein] + H2O = L-glutamyl-[protein] + NH4(+). With respect to regulation, acyltransferase activity is regulated by the binding of GTP and Ca(2+): inactivated by GTP, which stabilizes its closed structure, thereby obstructing the accessibility of substrates to the active sites. In contrast, Ca(2+) acts as a cofactor by inducing conformational change to the active open form. In absence of Ca(2+), Mg(2+) may bind Ca(2+)-binding sites, promoting GTP-binding and subsequent inhibition of the acyltransferase activity. Extracellularly reduced and activated by CLIC3. Functionally, calcium-dependent acyltransferase that catalyzes the formation of covalent bonds between peptide-bound glutamine and various primary amines, such as gamma-amino group of peptide-bound lysine, or mono- and polyamines, thereby producing cross-linked or aminated proteins, respectively. Involved in many biological processes, such as bone development, angiogenesis, wound healing, cellular differentiation, chromatin modification and apoptosis. Acts as a protein-glutamine gamma-glutamyltransferase by mediating the cross-linking of proteins, such as ACO2, HSPB6, FN1, HMGB1, RAP1GDS1, SLC25A4/ANT1, SPP1 and WDR54. Under physiological conditions, the protein cross-linking activity is inhibited by GTP; inhibition is relieved by Ca(2+) in response to various stresses. When secreted, catalyzes cross-linking of proteins of the extracellular matrix, such as FN1 and SPP1 resulting in the formation of scaffolds. Plays a key role during apoptosis, both by (1) promoting the cross-linking of cytoskeletal proteins resulting in condensation of the cytoplasm, and by (2) mediating cross-linking proteins of the extracellular matrix, resulting in the irreversible formation of scaffolds that stabilize the integrity of the dying cells before their clearance by phagocytosis, thereby preventing the leakage of harmful intracellular components. In addition to protein cross-linking, can use different monoamine substrates to catalyze a vast array of protein post-translational modifications: mediates aminylation of serotonin, dopamine, noradrenaline or histamine into glutamine residues of target proteins to generate protein serotonylation, dopaminylation, noradrenalinylation or histaminylation, respectively. Mediates protein serotonylation of small GTPases during activation and aggregation of platelets, leading to constitutive activation of these GTPases. Plays a key role in chromatin organization by mediating serotonylation and dopaminylation of histone H3. Catalyzes serotonylation of 'Gln-5' of histone H3 (H3Q5ser) during serotonergic neuron differentiation, thereby facilitating transcription. Acts as a mediator of neurotransmission-independent role of nuclear dopamine in ventral tegmental area (VTA) neurons: catalyzes dopaminylation of 'Gln-5' of histone H3 (H3Q5dop), thereby regulating relapse-related transcriptional plasticity in the reward system. Regulates vein remodeling by mediating serotonylation and subsequent inactivation of ATP2A2/SERCA2. Also acts as a protein deamidase by mediating the side chain deamidation of specific glutamine residues of proteins to glutamate. Catalyzes specific deamidation of protein gliadin, a component of wheat gluten in the diet. May also act as an isopeptidase cleaving the previously formed cross-links. Also able to participate in signaling pathways independently of its acyltransferase activity: acts as a signal transducer in alpha-1 adrenergic receptor-mediated stimulation of phospholipase C-delta (PLCD) activity and is required for coupling alpha-1 adrenergic agonists to the stimulation of phosphoinositide lipid metabolism. The protein is Protein-glutamine gamma-glutamyltransferase 2 of Mus musculus (Mouse).